A 219-amino-acid chain; its full sequence is Leukocyte surface antigen CD53 (219 aa).

The Cytoplasmic segment spans residues M1 to Y11. Residues V12–I32 traverse the membrane as a helical segment. Residues Y33 to N54 lie on the Extracellular side of the membrane. Residues V55–L69 form a helical membrane-spanning segment. The Cytoplasmic portion of the chain corresponds to G70–C80. Residues L81–Y106 traverse the membrane as a helical segment. Topologically, residues E107 to N181 are extracellular. 2 N-linked (GlcNAc...) asparagine glycosylation sites follow: N129 and N148. The chain crosses the membrane as a helical span at residues F182–L206. The Cytoplasmic portion of the chain corresponds to N207 to L219.

It belongs to the tetraspanin (TM4SF) family. In terms of assembly, interacts with SCIMP. Interacts with CD45/PTPRC. Interacts with IL7R. Interacts with RBL2 and PPP2CA. B-cells, monocytes, macrophages, neutrophils, single (CD4 or CD8) positive thymocytes and peripheral T-cells.

It is found in the cell membrane. The protein resides in the cell junction. It localises to the membrane. The protein localises to the synapse. Structural component of specialized membrane microdomains known as tetraspanin-enriched microdomains (TERMs), which act as platforms for receptor clustering and signaling. Participates thereby in diverse biological functions such as cell signal transduction, adhesion, migration and protein trafficking. Plays a role in the activation of monocytes and B-cells. Acts as an essential regulator of B-cell development by promoting interleukin-7 receptor/IL7R signaling. Also promotes, in B-cells, the BCR signaling by recruiting PKC to the plasma membrane in order to phosphorylate its substrates. Plays an essential role in B- and T-cells homing to lymph nodes by stabilizing L-selectin/SELL cell surface expression. Also mediates metabolic and inflammatory functions in hepatocytes and adipose tissue by promoting TNF-alpha and LPS signaling independent of the immune compartment. This Homo sapiens (Human) protein is Leukocyte surface antigen CD53 (CD53).